Here is a 2117-residue protein sequence, read N- to C-terminus: Tudor domain-containing 6 (2117 aa).

Tudor domains lie at 62–118 (DGNP…FFYL), 291–350 (AENL…FFRM), 527–584 (KPVV…FQQL), 757–816 (EPLL…FLKM), and 974–1030 (PQTF…AGDI). A disordered region spans residues 1125–1216 (ASACKKESST…SSKPEVVKPK (92 aa)). A compositionally biased stretch (basic and acidic residues) spans 1127 to 1152 (ACKKESSTGPKRDAIDQVPKSRESHA). 2 stretches are compositionally biased toward polar residues: residues 1153–1174 (IQRS…STNG) and 1181–1209 (DSGT…TSSK). Tudor domains follow at residues 1282-1340 (DIHE…FASF) and 1485-1543 (CMPV…LSDV).

As to quaternary structure, interacts (via Tudor domain) with buc (when dimethylated on arginine residues); and may be responsible for recruitment of different protein complexes to germ plasm.

The protein resides in the cytoplasm. Functionally, tudor domain-containing protein involved in germ cell development, more specifically the formation of chromatoid body (during spermiogenesis), Balbiani body (during oogenesis), germ plasm (upon fertilization), and for proper miRNA expression and spliceosome maturation. Required for Balbiani body and germ plasm formation and mobility through interaction with dimethylated arginines in the prion-like protein Bucky ball (buc). Coordinates transcript deposition into future primordial germ cells. Interacts with known germ plasm mRNAs such as vasa, dazl, nanos3 and hook2. The protein is Tudor domain-containing 6 of Danio rerio (Zebrafish).